The chain runs to 252 residues: Probable transcriptional regulatory protein Haur_3030 (252 aa).

It belongs to the TACO1 family.

The protein resides in the cytoplasm. The chain is Probable transcriptional regulatory protein Haur_3030 from Herpetosiphon aurantiacus (strain ATCC 23779 / DSM 785 / 114-95).